We begin with the raw amino-acid sequence, 412 residues long: Probable tRNA sulfurtransferase (412 aa).

One can recognise a THUMP domain in the interval 58 to 163 (DEVIKQLGYV…SEGTYIYVGK (106 aa)). ATP contacts are provided by residues 181–182 (ML), 206–207 (HF), R265, G287, and Q296.

It belongs to the ThiI family.

It is found in the cytoplasm. It catalyses the reaction [ThiI sulfur-carrier protein]-S-sulfanyl-L-cysteine + a uridine in tRNA + 2 reduced [2Fe-2S]-[ferredoxin] + ATP + H(+) = [ThiI sulfur-carrier protein]-L-cysteine + a 4-thiouridine in tRNA + 2 oxidized [2Fe-2S]-[ferredoxin] + AMP + diphosphate. It carries out the reaction [ThiS sulfur-carrier protein]-C-terminal Gly-Gly-AMP + S-sulfanyl-L-cysteinyl-[cysteine desulfurase] + AH2 = [ThiS sulfur-carrier protein]-C-terminal-Gly-aminoethanethioate + L-cysteinyl-[cysteine desulfurase] + A + AMP + 2 H(+). It functions in the pathway cofactor biosynthesis; thiamine diphosphate biosynthesis. Catalyzes the ATP-dependent transfer of a sulfur to tRNA to produce 4-thiouridine in position 8 of tRNAs, which functions as a near-UV photosensor. Also catalyzes the transfer of sulfur to the sulfur carrier protein ThiS, forming ThiS-thiocarboxylate. This is a step in the synthesis of thiazole, in the thiamine biosynthesis pathway. The sulfur is donated as persulfide by IscS. This chain is Probable tRNA sulfurtransferase, found in Acholeplasma laidlawii (strain PG-8A).